The primary structure comprises 271 residues: MTYLQESSRPAVTVPKLQAMRDAGEKIAMLTCYDASFSALLDRAGTDVLLIGDSLGNVLQGHTTTLPVSIDDIAYHTACVARAQPRALVVADLPFGTYGTPVDAFANAVKLMRAGAQMVKLEGGEWLADTIRFLVERSVPVCAHLGLTPQSVHAFGGFKVQGKTEAGAAQLLRDARAIEDAGAQLVVLEAVPTLVAAEVTHMLKIPTIGIGAGVDCSGQVLVLHDMLGVFPGKRPRFVKDFMQGQPNIQAAVEAYVSAVKDRSFPGPEHSF.

Positions 53 and 92 each coordinate Mg(2+). 3-methyl-2-oxobutanoate is bound by residues 53 to 54, Asp-92, and Lys-120; that span reads DS. Glu-122 contacts Mg(2+). Glu-189 acts as the Proton acceptor in catalysis.

Belongs to the PanB family. As to quaternary structure, homodecamer; pentamer of dimers. Requires Mg(2+) as cofactor.

It localises to the cytoplasm. The catalysed reaction is 3-methyl-2-oxobutanoate + (6R)-5,10-methylene-5,6,7,8-tetrahydrofolate + H2O = 2-dehydropantoate + (6S)-5,6,7,8-tetrahydrofolate. It participates in cofactor biosynthesis; (R)-pantothenate biosynthesis; (R)-pantoate from 3-methyl-2-oxobutanoate: step 1/2. Its function is as follows. Catalyzes the reversible reaction in which hydroxymethyl group from 5,10-methylenetetrahydrofolate is transferred onto alpha-ketoisovalerate to form ketopantoate. The chain is 3-methyl-2-oxobutanoate hydroxymethyltransferase 1 from Burkholderia cenocepacia (strain HI2424).